Consider the following 332-residue polypeptide: Delta-aminolevulinic acid dehydratase (332 aa).

Lys199 serves as the catalytic Schiff-base intermediate with substrate. 2 residues coordinate 5-aminolevulinate: Arg209 and Lys221. Glu237 contributes to the Mg(2+) binding site. Residue Lys252 is the Schiff-base intermediate with substrate of the active site. 2 residues coordinate 5-aminolevulinate: Ser278 and Tyr317.

This sequence belongs to the ALAD family. Homooctamer.

It catalyses the reaction 2 5-aminolevulinate = porphobilinogen + 2 H2O + H(+). It functions in the pathway porphyrin-containing compound metabolism; protoporphyrin-IX biosynthesis; coproporphyrinogen-III from 5-aminolevulinate: step 1/4. Catalyzes an early step in the biosynthesis of tetrapyrroles. Binds two molecules of 5-aminolevulinate per subunit, each at a distinct site, and catalyzes their condensation to form porphobilinogen. The protein is Delta-aminolevulinic acid dehydratase (hemB) of Chlamydia pneumoniae (Chlamydophila pneumoniae).